The sequence spans 332 residues: Probable cytosolic iron-sulfur protein assembly protein 1 (332 aa).

7 WD repeats span residues 9–48 (GHTD…LVTT), 52–93 (GHNR…WQFL), 98–137 (GHEN…DEFE), 144–183 (DHTQ…WICV), 188–230 (GHES…GGTG), 257–295 (AHTR…QWVV), and 302–332 (AHGV…IWEV).

It belongs to the WD repeat CIA1 family. Interacts with NAR1.

It localises to the cytoplasm. The protein localises to the nucleus. Functionally, essential component of the cytosolic iron-sulfur (Fe/S) protein assembly machinery. Required for the maturation of extramitochondrial Fe/S proteins. This is Probable cytosolic iron-sulfur protein assembly protein 1 from Yarrowia lipolytica (strain CLIB 122 / E 150) (Yeast).